The sequence spans 185 residues: Ribosome-recycling factor (185 aa).

Belongs to the RRF family.

Its subcellular location is the cytoplasm. Its function is as follows. Responsible for the release of ribosomes from messenger RNA at the termination of protein biosynthesis. May increase the efficiency of translation by recycling ribosomes from one round of translation to another. This Histophilus somni (strain 2336) (Haemophilus somnus) protein is Ribosome-recycling factor.